A 332-amino-acid chain; its full sequence is MSQYTVVTGAAGFIGANIVKALNERGETNIIAVDNLTKADKFKNLTDCEIADYLDKTEFLSVVEEGVLDGSVAAIFHEGACSDTMETDGRYMMDNNYRYSGALLKFCQDEGAQFLYASSASVYGSGRVFSESRECESPLNVYGYSKFLFDQSVRRLWAERTAQIAGFRYFNVYGPREQHKGRMASVAFHFFNQYRAEGRVKLFEGCDGYPNGEQRRDFVSVEDVVRVNMWFLDHPEVSGIFNVGTGRCQSFNDVAVATVNACRAAEGQDALTLDEMQAQGLIGYVAFPEALKGKYQSYTEADTAALRRAGYDGSFYSVEEGTARYIERLLQS.

NADP(+) is bound by residues 13 to 14, 34 to 35, Lys41, Lys56, 78 to 82, and Asn95; these read FI, DN, and EGACS. The active-site Proton acceptor is Tyr142. Position 146 (Lys146) interacts with NADP(+). Asn171 is a substrate binding site. NADP(+) is bound by residues Val172 and Lys180. The Proton acceptor role is filled by Lys180. Substrate is bound by residues Arg182, His189, 203–206, Arg216, and Tyr295; that span reads FEGC.

Belongs to the NAD(P)-dependent epimerase/dehydratase family. HldD subfamily. Homopentamer. The cofactor is NADP(+).

It carries out the reaction ADP-D-glycero-beta-D-manno-heptose = ADP-L-glycero-beta-D-manno-heptose. It participates in nucleotide-sugar biosynthesis; ADP-L-glycero-beta-D-manno-heptose biosynthesis; ADP-L-glycero-beta-D-manno-heptose from D-glycero-beta-D-manno-heptose 7-phosphate: step 4/4. Its function is as follows. Catalyzes the interconversion between ADP-D-glycero-beta-D-manno-heptose and ADP-L-glycero-beta-D-manno-heptose via an epimerization at carbon 6 of the heptose. In Thiobacillus denitrificans (strain ATCC 25259 / T1), this protein is ADP-L-glycero-D-manno-heptose-6-epimerase.